The chain runs to 493 residues: Leucine-rich repeat-containing protein 14 (493 aa).

One copy of the LRR 1; degenerate repeat lies at 111-146 (KHTLRVLDMTGLLDDGVEQDPGTMSMWDCTAAVART). An LRR 2; degenerate repeat occupies 194 to 218 (RLCCRDLRAEDLPMRNTVALLQLLD). The LRR 3; degenerate repeat unit spans residues 219-246 (AGCLRRIDLRFNNLGLRGLSVIIPHVAR). Residues 247–282 (FQHLASLRLHYVHGDSRQPSVDGEDNFRYFLAQMGR) form an LRR 4; degenerate repeat. LRR repeat units lie at residues 283 to 307 (FICLRELSIGSSLLSGRLDQLLSTL), 308 to 339 (QRPLESLELAFCALLPEDLRFLAQSSHAAHLK), 340 to 360 (KLDLSGNDLSGNQLTPFQGLL), 364 to 391 (AATLLHLELTECQIADAQLLATLPTLTR), and 392 to 416 (CASLRYLGLYGNPLSMAGLKELLRD).

The protein belongs to the PRAME family. LRRC14 subfamily. As to quaternary structure, interacts with IKBKB; disrupts IKBKB-IKBKG interaction preventing I-kappa-B-kinase (IKK) core complex formation and leading to a decrease of IKBKB phosphorylation and NF-kappaB activation. Interacts with CHUK.

It is found in the cytoplasm. Its function is as follows. Negatively regulates Toll-like receptor-mediated NF-kappa-B signaling by disrupting IKK core complex formation through interaction with IKBKB. The chain is Leucine-rich repeat-containing protein 14 from Rattus norvegicus (Rat).